We begin with the raw amino-acid sequence, 427 residues long: Glutamate-1-semialdehyde 2,1-aminomutase (427 aa).

Lysine 266 is modified (N6-(pyridoxal phosphate)lysine).

This sequence belongs to the class-III pyridoxal-phosphate-dependent aminotransferase family. HemL subfamily. Homodimer. Requires pyridoxal 5'-phosphate as cofactor.

The protein resides in the cytoplasm. The catalysed reaction is (S)-4-amino-5-oxopentanoate = 5-aminolevulinate. It participates in porphyrin-containing compound metabolism; protoporphyrin-IX biosynthesis; 5-aminolevulinate from L-glutamyl-tRNA(Glu): step 2/2. The protein is Glutamate-1-semialdehyde 2,1-aminomutase of Aromatoleum aromaticum (strain DSM 19018 / LMG 30748 / EbN1) (Azoarcus sp. (strain EbN1)).